We begin with the raw amino-acid sequence, 374 residues long: 3-dehydroquinate synthase (374 aa).

This sequence belongs to the archaeal-type DHQ synthase family.

The catalysed reaction is 2-amino-2,3,7-trideoxy-D-lyxo-hept-6-ulosonate + NAD(+) + H2O = 3-dehydroquinate + NH4(+) + NADH + H(+). Its function is as follows. Catalyzes the oxidative deamination and cyclization of 2-amino-3,7-dideoxy-D-threo-hept-6-ulosonic acid (ADH) to yield 3-dehydroquinate (DHQ), which is fed into the canonical shikimic pathway of aromatic amino acid biosynthesis. In Methanocella arvoryzae (strain DSM 22066 / NBRC 105507 / MRE50), this protein is 3-dehydroquinate synthase.